A 352-amino-acid chain; its full sequence is Thiosulfate transporter TsuA (352 aa).

The helical transmembrane segment at M1–R21 threads the bilayer. Residues G22 to A44 are Cytoplasmic-facing. A helical transmembrane segment spans residues L45 to L65. Topologically, residues T66 to G70 are periplasmic. The helical transmembrane segment at A71 to A91 threads the bilayer. Over G92–A102 the chain is Cytoplasmic. Residues G103–M123 traverse the membrane as a helical segment. At R124–T148 the chain is on the periplasmic side. A helical membrane pass occupies residues F149–M169. The Cytoplasmic segment spans residues K170 to R197. The helical transmembrane segment at W198–S218 threads the bilayer. Topologically, residues E219 to Y247 are periplasmic. A helical transmembrane segment spans residues I248 to A268. The Cytoplasmic segment spans residues S269–G289. Residues V290 to M310 traverse the membrane as a helical segment. Over T311 to Q317 the chain is Periplasmic. The helical transmembrane segment at G318–V338 threads the bilayer. The Cytoplasmic portion of the chain corresponds to R339 to N352.

Belongs to the TsuA/YedE (TC 9.B.102) family.

The protein localises to the cell inner membrane. The catalysed reaction is thiosulfate(in) = thiosulfate(out). Its function is as follows. Mediates thiosulfate uptake. In Escherichia coli (strain K12), this protein is Thiosulfate transporter TsuA.